The primary structure comprises 94 residues: Co-chaperonin GroES (94 aa).

This sequence belongs to the GroES chaperonin family. In terms of assembly, heptamer of 7 subunits arranged in a ring. Interacts with the chaperonin GroEL.

The protein resides in the cytoplasm. Functionally, together with the chaperonin GroEL, plays an essential role in assisting protein folding. The GroEL-GroES system forms a nano-cage that allows encapsulation of the non-native substrate proteins and provides a physical environment optimized to promote and accelerate protein folding. GroES binds to the apical surface of the GroEL ring, thereby capping the opening of the GroEL channel. This is Co-chaperonin GroES from Lactobacillus gasseri (strain ATCC 33323 / DSM 20243 / BCRC 14619 / CIP 102991 / JCM 1131 / KCTC 3163 / NCIMB 11718 / NCTC 13722 / AM63).